Consider the following 445-residue polypeptide: Phosphoglucosamine mutase (445 aa).

The active-site Phosphoserine intermediate is the serine 102. Mg(2+) is bound by residues serine 102, aspartate 241, aspartate 243, and aspartate 245. At serine 102 the chain carries Phosphoserine.

The protein belongs to the phosphohexose mutase family. Requires Mg(2+) as cofactor. In terms of processing, activated by phosphorylation.

It catalyses the reaction alpha-D-glucosamine 1-phosphate = D-glucosamine 6-phosphate. In terms of biological role, catalyzes the conversion of glucosamine-6-phosphate to glucosamine-1-phosphate. The sequence is that of Phosphoglucosamine mutase from Rhodococcus jostii (strain RHA1).